A 155-amino-acid chain; its full sequence is Ribosomal RNA large subunit methyltransferase H (155 aa).

S-adenosyl-L-methionine-binding positions include leucine 72, glycine 103, and 122–127; that span reads LSKLTM.

It belongs to the RNA methyltransferase RlmH family. As to quaternary structure, homodimer.

It localises to the cytoplasm. It catalyses the reaction pseudouridine(1915) in 23S rRNA + S-adenosyl-L-methionine = N(3)-methylpseudouridine(1915) in 23S rRNA + S-adenosyl-L-homocysteine + H(+). Its function is as follows. Specifically methylates the pseudouridine at position 1915 (m3Psi1915) in 23S rRNA. In Methylobacillus flagellatus (strain ATCC 51484 / DSM 6875 / VKM B-1610 / KT), this protein is Ribosomal RNA large subunit methyltransferase H.